Consider the following 285-residue polypeptide: Cytochrome P450 monooxygenase eupD (285 aa).

Residues 1–19 form the signal peptide; it reads MSIAGLVTTLPWLMNMLRA. C229 contacts heme.

The protein belongs to the cytochrome P450 family. Heme is required as a cofactor.

The protein operates within secondary metabolite biosynthesis; terpenoid biosynthesis. Cytochrome P450 monooxygenase; part of the gene cluster that mediates the biosynthesis of eupenifeldin, a bistropolone meroterpenoid that acts as an antitumor agent. The first step of eupenifeldin biosynthesis is the biosynthesis of 3-methylorcinaldehyde performed by the non-reducing polyketide synthase eupA. Oxidative dearomatization of 3-methylorcinaldehyde likely catalyzed by the FAD-dependent monooxygenase eupB is followed by oxidative ring expansion by the 2-oxoglutarate-dependent dioxygenase eupC to provide the first tropolone metabolite, tropolone stipitaldehyde. In parallel, generation of sesquiterpene alpha-humulene from farnesylpyrophosphate (FPP) is catalyzed by the terpene cyclase eupE. The cytochrome P450 monooxygenase eupD then hydroxylates humulene to humulenol. The putative Diels-Alderase eupF probably catalyzes the formation of the tropolone-humulene skeleton by linking humulenol and the polyketide moiety. The short-chain dehydrogenase/reductase eupG and the flavin-dependent monooxygenase eupH are also essential for eupenifeldin biosynthesis and are likely the additional decorating enzymes of the tropolone-humulene skeleton to produce final eupenifeldin or derivatives. The sequence is that of Cytochrome P450 monooxygenase eupD from Phoma sp.